Reading from the N-terminus, the 224-residue chain is Charged multivesicular body protein 3 (224 aa).

Gly-2 is lipidated: N-myristoyl glycine. The intramolecular interaction with C-terminus stretch occupies residues 2-113 (GLFGKTQEKP…LQKSTEVMKA (112 aa)). Positions 22–54 (KIRKEMRVVDRQIRDIQREEEKVKRSVKDAAKK) form a coiled coil. 2 important for autoinhibitory function regions span residues 59–64 (VCVVLA) and 168–169 (IL). The stretch at 149–224 (ESMDDQEEME…MQSRLATLRS (76 aa)) forms a coiled coil. An intramolecular interaction with N-terminus region spans residues 151 to 222 (MDDQEEMEEA…EAMQSRLATL (72 aa)). Positions 151-224 (MDDQEEMEEA…MQSRLATLRS (74 aa)) are interaction with VPS4A. A Glycyl lysine isopeptide (Lys-Gly) (interchain with G-Cter in ubiquitin) cross-link involves residue Lys-179. The segment at 180–224 (APSKVTDALPEPEPAGAMAASEEGEEEEDEEDLEAMQSRLATLRS) is disordered. 3 interaction with STAMBP regions span residues 196–224 (AMAA…TLRS), 205–209 (EEEDE), and 223–224 (RS). At Ser-200 the chain carries Phosphoserine. Residues 201 to 213 (EEGEEEEDEEDLE) carry the MIT-interacting motif motif. Residues 201 to 213 (EEGEEEEDEEDLE) show a composition bias toward acidic residues.

It belongs to the SNF7 family. In terms of assembly, probable core component of the endosomal sorting required for transport complex III (ESCRT-III). ESCRT-III components are thought to multimerize to form a flat lattice on the perimeter membrane of the endosome. Several assembly forms of ESCRT-III may exist that interact and act sequentially. Forms a metastable monomer in solution; its core structure (without part of the putative autoinhibitory C-terminal acidic region) oligomerizes into a flat lattice via two different dimerization interfaces. In vitro, heteromerizes with CHMP2A (but not CHMP4) to form helical tubular structures that expose membrane-interacting sites on the outside whereas VPS4B can associate on the inside of the tubule. May interact with IGFBP7; the relevance of such interaction however remains unclear. Interacts with CHMP2A. Interacts with CHMP4A; the interaction requires the release of CHMP4A autoinhibition. Interacts with VPS4A. Interacts with STAMBP; the interaction appears to relieve the autoinhibition of CHMP3. Interacts with VTA1. Expressed in lung, testis, heart, spleen, skeletal muscle, kidney, liver and brain.

The protein resides in the cytoplasm. It localises to the cytosol. Its subcellular location is the membrane. The protein localises to the endosome. It is found in the late endosome membrane. Functionally, probable core component of the endosomal sorting required for transport complex III (ESCRT-III) which is involved in multivesicular bodies (MVBs) formation and sorting of endosomal cargo proteins into MVBs. MVBs contain intraluminal vesicles (ILVs) that are generated by invagination and scission from the limiting membrane of the endosome and mostly are delivered to lysosomes enabling degradation of membrane proteins, such as stimulated growth factor receptors, lysosomal enzymes and lipids. The MVB pathway appears to require the sequential function of ESCRT-O, -I,-II and -III complexes. ESCRT-III proteins mostly dissociate from the invaginating membrane before the ILV is released. The ESCRT machinery also functions in topologically equivalent membrane fission events, such as the terminal stages of cytokinesis. ESCRT-III proteins are believed to mediate the necessary vesicle extrusion and/or membrane fission activities, possibly in conjunction with the AAA ATPase VPS4. Selectively binds to phosphatidylinositol 3,5-bisphosphate PtdIns(3,5)P2 and PtdIns(3,4)P2 in preference to other phosphoinositides tested. Involved in late stages of cytokinesis. Plays a role in endosomal sorting/trafficking of EGF receptor. This Mus musculus (Mouse) protein is Charged multivesicular body protein 3 (Chmp3).